The chain runs to 331 residues: Aspartate carbamoyltransferase catalytic subunit (331 aa).

Positions 76 and 77 each coordinate carbamoyl phosphate. Lys-104 provides a ligand contact to L-aspartate. Carbamoyl phosphate contacts are provided by Arg-126, His-154, and Gln-157. Residues Arg-187 and Arg-246 each contribute to the L-aspartate site. Residues Gly-287 and Pro-288 each coordinate carbamoyl phosphate.

The protein belongs to the aspartate/ornithine carbamoyltransferase superfamily. ATCase family. As to quaternary structure, heterododecamer (2C3:3R2) of six catalytic PyrB chains organized as two trimers (C3), and six regulatory PyrI chains organized as three dimers (R2).

It carries out the reaction carbamoyl phosphate + L-aspartate = N-carbamoyl-L-aspartate + phosphate + H(+). Its pathway is pyrimidine metabolism; UMP biosynthesis via de novo pathway; (S)-dihydroorotate from bicarbonate: step 2/3. Its function is as follows. Catalyzes the condensation of carbamoyl phosphate and aspartate to form carbamoyl aspartate and inorganic phosphate, the committed step in the de novo pyrimidine nucleotide biosynthesis pathway. The protein is Aspartate carbamoyltransferase catalytic subunit of Dehalococcoides mccartyi (strain ATCC BAA-2100 / JCM 16839 / KCTC 5957 / BAV1).